Consider the following 633-residue polypeptide: Threonine--tRNA ligase (633 aa).

One can recognise a TGS domain in the interval 1–61 (MINVYFSDNS…TEDCKFEVIT (61 aa)). The interval 242–533 (DHRKIGKELE…LIEHHSGKLP (292 aa)) is catalytic. 3 residues coordinate Zn(2+): Cys333, His384, and His510.

This sequence belongs to the class-II aminoacyl-tRNA synthetase family. As to quaternary structure, homodimer. The cofactor is Zn(2+).

It localises to the cytoplasm. It carries out the reaction tRNA(Thr) + L-threonine + ATP = L-threonyl-tRNA(Thr) + AMP + diphosphate + H(+). Functionally, catalyzes the attachment of threonine to tRNA(Thr) in a two-step reaction: L-threonine is first activated by ATP to form Thr-AMP and then transferred to the acceptor end of tRNA(Thr). Also edits incorrectly charged L-seryl-tRNA(Thr). The sequence is that of Threonine--tRNA ligase from Ehrlichia ruminantium (strain Gardel).